We begin with the raw amino-acid sequence, 309 residues long: 2-dehydro-3-deoxygluconokinase (309 aa).

Residues Gly28–Asn32, Tyr88, Tyr102–Arg104, and Arg170 each bind substrate. Residues Asn168 to Arg170, Lys228 to Ser233, and Ala261 to Asp264 each bind ATP. A substrate-binding site is contributed by Asp264. The Proton acceptor role is filled by Asp264.

Belongs to the carbohydrate kinase PfkB family.

The enzyme catalyses 2-dehydro-3-deoxy-D-gluconate + ATP = 2-dehydro-3-deoxy-6-phospho-D-gluconate + ADP + H(+). It participates in carbohydrate acid metabolism; 2-dehydro-3-deoxy-D-gluconate degradation; D-glyceraldehyde 3-phosphate and pyruvate from 2-dehydro-3-deoxy-D-gluconate: step 1/2. Its function is as follows. Catalyzes the phosphorylation of 2-keto-3-deoxygluconate (KDG) to produce 2-keto-3-deoxy-6-phosphogluconate (KDPG). This chain is 2-dehydro-3-deoxygluconokinase (kdgK), found in Escherichia coli (strain K12).